The following is a 465-amino-acid chain: Sodium-dependent phosphate transport protein 1 (465 aa).

3 N-linked (GlcNAc...) asparagine glycosylation sites follow: Asn39, Asn47, and Asn56. Transmembrane regions (helical) follow at residues 79–99 (GLVLSSVFLGMVVIQVPVGYL), 117–137 (SVLSLLIPPAAQVGAALVIVC), 176–196 (FVMGPFIALLVSGFICDLLGW), 199–219 (VFYIFGIVGCVLSLFWFILLF), 260–280 (LPLWAIILNSFAFIWSNNLLV), 299–319 (GLLSSLPYLLAYICGIVAGQM), 337–357 (LFTTLGIFCPVIFVVCLLYLS), 363–383 (TVIFLTLANSTLSFSFCGQLI), 399–419 (VTALIGIFGGLISSTLAGLIL), and 431–451 (FFLMAGINVTCLAFYLLFAKG).

It belongs to the major facilitator superfamily. Sodium/anion cotransporter family. As to quaternary structure, interacts with PDZK1.

The protein localises to the apical cell membrane. It catalyses the reaction 3 Na(+)(out) + phosphate(out) = 3 Na(+)(in) + phosphate(in). The enzyme catalyses urate(out) = urate(in). In terms of biological role, important for the resorption of phosphate by the kidney. May be involved in actively transporting phosphate into cells via Na(+) cotransport in the renal brush border membrane. Plays a role in urate transport in the kidney. This is Sodium-dependent phosphate transport protein 1 (Slc17a1) from Rattus norvegicus (Rat).